Reading from the N-terminus, the 100-residue chain is Small ribosomal subunit protein uS14c (100 aa).

The protein belongs to the universal ribosomal protein uS14 family. Part of the 30S ribosomal subunit.

Its subcellular location is the plastid. It localises to the chloroplast. In terms of biological role, binds 16S rRNA, required for the assembly of 30S particles. The polypeptide is Small ribosomal subunit protein uS14c (Oltmannsiellopsis viridis (Marine flagellate)).